The following is a 172-amino-acid chain: 3-hydroxydecanoyl-[acyl-carrier-protein] dehydratase (172 aa).

His-71 is an active-site residue.

This sequence belongs to the thioester dehydratase family. FabA subfamily. As to quaternary structure, homodimer.

Its subcellular location is the cytoplasm. It catalyses the reaction a (3R)-hydroxyacyl-[ACP] = a (2E)-enoyl-[ACP] + H2O. It carries out the reaction (3R)-hydroxydecanoyl-[ACP] = (2E)-decenoyl-[ACP] + H2O. The enzyme catalyses (2E)-decenoyl-[ACP] = (3Z)-decenoyl-[ACP]. It functions in the pathway lipid metabolism; fatty acid biosynthesis. Functionally, necessary for the introduction of cis unsaturation into fatty acids. Catalyzes the dehydration of (3R)-3-hydroxydecanoyl-ACP to E-(2)-decenoyl-ACP and then its isomerization to Z-(3)-decenoyl-ACP. Can catalyze the dehydratase reaction for beta-hydroxyacyl-ACPs with saturated chain lengths up to 16:0, being most active on intermediate chain length. In Brucella abortus (strain S19), this protein is 3-hydroxydecanoyl-[acyl-carrier-protein] dehydratase.